Here is a 161-residue protein sequence, read N- to C-terminus: Ribonuclease H (161 aa).

Residues 2 to 141 (TNNEIIAATD…ADSLARQAAN (140 aa)) form the RNase H type-1 domain. 4 residues coordinate Mg(2+): D11, E46, D69, and D133.

The protein belongs to the RNase H family. As to quaternary structure, monomer. Mg(2+) is required as a cofactor.

The protein resides in the cytoplasm. It catalyses the reaction Endonucleolytic cleavage to 5'-phosphomonoester.. In terms of biological role, endonuclease that specifically degrades the RNA of RNA-DNA hybrids. The chain is Ribonuclease H from Tropheryma whipplei (strain TW08/27) (Whipple's bacillus).